The sequence spans 423 residues: Large ribosomal subunit protein mL37 (423 aa).

Residues Met-1 to Gly-29 constitute a mitochondrion transit peptide.

Belongs to the mitochondrion-specific ribosomal protein mL37 family. As to quaternary structure, component of the mitochondrial ribosome large subunit (39S) which comprises a 16S rRNA and about 50 distinct proteins.

It localises to the mitochondrion. The polypeptide is Large ribosomal subunit protein mL37 (MRPL37) (Bos taurus (Bovine)).